The chain runs to 560 residues: Choline/ethanolamine transporter FLVCR1 (560 aa).

Positions 1-43 (MARPDDEVGPAVAPGHPLGKGYLPVPKGAPDGEARLVPQNGPE) are disordered. The Cytoplasmic segment spans residues 1–92 (MARPDDEVGP…EDVPCPACPP (92 aa)). Residues 93–117 (RTALSPRRFVVLLIFSLYSLVNAFQ) traverse the membrane as a helical segment. Residues 118-135 (WIQYSSISNVFEDFYEVS) lie on the Extracellular side of the membrane. The helical transmembrane segment at 136 to 163 (PLHINWLSMVYMVAYVPLIFPATWLLDT) threads the bilayer. The Cytoplasmic portion of the chain corresponds to 164 to 165 (RG). A helical transmembrane segment spans residues 166–185 (LRLTALLGSGLNCLGAWVKC). Over 186-192 (GSVQRHL) the chain is Extracellular. The helical transmembrane segment at 193–221 (FWVTMLGQILCSVAQVFILGLPSPVASVW) threads the bilayer. Residue Gln207 participates in ethanolamine binding. Residues 222–226 (FGPKE) are Cytoplasmic-facing. The helical transmembrane segment at 227-252 (VSTACATAVLGNQLGTAVGFLLPPVL) threads the bilayer. Residues 253 to 270 (VPALGTQNNTGLLAHTQN) are Extracellular-facing. The N-linked (GlcNAc...) asparagine glycan is linked to Asn270. A helical transmembrane segment spans residues 271 to 300 (NTDLLAHNINTMFYGTAFISTFLFFLTVIA). Residues 301 to 336 (FKEKPPLPPSQAQAILRDSPPEEYSYKSSIWNLCRN) lie on the Cytoplasmic side of the membrane. The helical transmembrane segment at 337–367 (IPFVLLLVSYGIMTGAFYSISTLLNQIILTY) threads the bilayer. The Extracellular portion of the chain corresponds to 368–371 (YVGE). Residues 372–400 (EVNAGRIGLTLVVAGMVGSILCGLWLDYT) form a helical membrane-spanning segment. Residues 401–402 (KT) are Cytoplasmic-facing. The chain crosses the membrane as a helical span at residues 403–425 (YKQTTLIVYVLSFIGMLIFTFTL). Residues 426–428 (NLG) are Extracellular-facing. The helical transmembrane segment at 429 to 458 (YIVALFFTGGILGFFMTGYLPLGFEFAVEI) threads the bilayer. The Cytoplasmic portion of the chain corresponds to 459-466 (TYPESEGM). The chain crosses the membrane as a helical span at residues 467-492 (SSGLLNTAAQILGIFFTLAQGKITTD). Gln476 contributes to the ethanolamine binding site. Residue Gln476 participates in choline binding. Topologically, residues 493–495 (YNS) are extracellular. Residues 496 to 518 (PEAGNIFLCAWMFVGIILTALIK) form a helical membrane-spanning segment. Topologically, residues 519–560 (SDLRRHNINTGLTNIDVKAVPVDSRVDPKPKAMVSIQSESSL) are cytoplasmic. The residue at position 542 (Ser542) is a Phosphoserine.

Belongs to the major facilitator superfamily. Feline leukemia virus subgroup C receptor (TC 2.A.1.28.1) family.

It localises to the cell membrane. It catalyses the reaction choline(out) = choline(in). The enzyme catalyses ethanolamine(in) = ethanolamine(out). The catalysed reaction is heme b(in) = heme b(out). Its function is as follows. Uniporter that mediates the transport of extracellular choline and ethanolamine into cells, thereby playing a key role in phospholipid biosynthesis. Choline and ethanolamine are the precursors of phosphatidylcholine and phosphatidylethanolamine, respectively, the two most abundant phospholipids. Transport is not coupled with proton transport and is exclusively driven by the choline (or ethanolamine) gradient across the plasma membrane. Also acts as a heme b transporter that mediates heme efflux from the cytoplasm to the extracellular compartment. In Mus terricolor (Earth-colored mouse), this protein is Choline/ethanolamine transporter FLVCR1 (Flvcr1).